A 94-amino-acid chain; its full sequence is Small ribosomal subunit protein uS19 (94 aa).

Belongs to the universal ribosomal protein uS19 family.

Functionally, protein S19 forms a complex with S13 that binds strongly to the 16S ribosomal RNA. In Hamiltonella defensa subsp. Acyrthosiphon pisum (strain 5AT), this protein is Small ribosomal subunit protein uS19.